A 139-amino-acid polypeptide reads, in one-letter code: ATP synthase epsilon chain (139 aa).

Belongs to the ATPase epsilon chain family. As to quaternary structure, F-type ATPases have 2 components, CF(1) - the catalytic core - and CF(0) - the membrane proton channel. CF(1) has five subunits: alpha(3), beta(3), gamma(1), delta(1), epsilon(1). CF(0) has three main subunits: a, b and c.

The protein resides in the cell inner membrane. Functionally, produces ATP from ADP in the presence of a proton gradient across the membrane. The sequence is that of ATP synthase epsilon chain from Haemophilus ducreyi (strain 35000HP / ATCC 700724).